Reading from the N-terminus, the 345-residue chain is NADH-quinone oxidoreductase subunit H (345 aa).

Transmembrane regions (helical) follow at residues 14-34 (IILA…LFLV), 84-104 (FILA…VIPF), 115-135 (VAIL…IMGG), 161-181 (IGLI…GDIV), 187-207 (GWGF…LFFI), 248-268 (YIAI…GWLS), 277-297 (VLWM…VKAI), and 309-329 (LGWK…AFAA).

Belongs to the complex I subunit 1 family. As to quaternary structure, NDH-1 is composed of 14 different subunits. Subunits NuoA, H, J, K, L, M, N constitute the membrane sector of the complex.

The protein resides in the cell inner membrane. It carries out the reaction a quinone + NADH + 5 H(+)(in) = a quinol + NAD(+) + 4 H(+)(out). Functionally, NDH-1 shuttles electrons from NADH, via FMN and iron-sulfur (Fe-S) centers, to quinones in the respiratory chain. The immediate electron acceptor for the enzyme in this species is believed to be ubiquinone. Couples the redox reaction to proton translocation (for every two electrons transferred, four hydrogen ions are translocated across the cytoplasmic membrane), and thus conserves the redox energy in a proton gradient. This subunit may bind ubiquinone. This Ruegeria pomeroyi (strain ATCC 700808 / DSM 15171 / DSS-3) (Silicibacter pomeroyi) protein is NADH-quinone oxidoreductase subunit H.